Here is a 109-residue protein sequence, read N- to C-terminus: MNTLPATISQAAKPCLSPVAVWQMLLTRLLEQHYGLTLNDTPFSDETVIKEHIDAGITLADAVNFLVEKYELVRIDHRGFSWQQQSPYISVVDILRARRSTGLLKTNVK.

Belongs to the CbtA/YkfI/YpjF toxin family. In terms of assembly, interacts with FtsZ but not MreB. Another group finds interaction with FtsZ and MreB.

Toxic component of a type IV toxin-antitoxin (TA) system. Acts as a dual toxin inhibitor that blocks cell division and cell elongation in genetically separable interactions with FtsZ and MreB. Overexpression results in inhibition of growth in liquid cultures. Overexpression leads to formation of lemon-shaped cells; inactivated by overexpression of cognate antitoxin YfjZ but not when the 2 genes are coexpressed from the same plasmid. Also neutralized by overexpression of non-cognate antitoxins YafW and CbeA. The polypeptide is Toxin YpjF (ypjF) (Escherichia coli (strain K12)).